We begin with the raw amino-acid sequence, 371 residues long: Signal peptide peptidase-like 1 (371 aa).

At 1–6 (MESLWK) the chain is on the lumenal side. The chain crosses the membrane as a helical span at residues 7–27 (LSYLLEPASLALILTAVSVAY). Residues 28–57 (ASASRALDHGREMERNLDFSEASITLDRSQ) lie on the Cytoplasmic side of the membrane. Residues 58–75 (ALMIPLASSCSLLLMFYL) traverse the membrane as a helical segment. Residues 76–80 (FSSVS) lie on the Lumenal side of the membrane. Residues 81–103 (HLVTAFTAVASAMALFFCLSPYV) traverse the membrane as a helical segment. The Cytoplasmic segment spans residues 104 to 123 (NCVRSRLGVGDPFVSRCCSK). The helical transmembrane segment at 124 to 146 (PFTRLQGLLVAICVGTVVAWLVS) threads the bilayer. Residues 147 to 149 (GHW) lie on the Lumenal side of the membrane. A helical transmembrane segment spans residues 150–167 (LLNNLLGISICIAFVSHV). Over 168-171 (RLPN) the chain is Cytoplasmic. The helical transmembrane segment at 172–192 (IKICALLLVCLFVYDVFWVFF) threads the bilayer. Asp186 is an active-site residue. The Lumenal portion of the chain corresponds to 193–258 (SERFFGANVM…LAPGSSPGDY (66 aa)). A helical transmembrane segment spans residues 259-279 (MMLGLGDMAIPGMLLALVLSF). Residue Asp265 is part of the active site. Over 280–301 (DHRKIKDMSVSQDMPPSKQRKY) the chain is Cytoplasmic. Residues 302 to 322 (VWYALTGYGVGLVTALAAGIL) form a helical membrane-spanning segment. The Lumenal portion of the chain corresponds to 323-326 (SQSP). A helical membrane pass occupies residues 327–347 (QPALLYLVPSTLGPVMYMSWL). A PAL motif is present at residues 328–330 (PAL). Topologically, residues 348–371 (RNELWELWEGSRPIINDKAHLLEV) are cytoplasmic.

Belongs to the peptidase A22B family.

The protein resides in the endosome membrane. In terms of biological role, intramembrane-cleaving aspartic protease (I-CLiP) that cleaves type II membrane signal peptides in the hydrophobic plane of the membrane. The sequence is that of Signal peptide peptidase-like 1 (SPPL1) from Oryza sativa subsp. japonica (Rice).